We begin with the raw amino-acid sequence, 471 residues long: Ribulose bisphosphate carboxylase large chain (471 aa).

Asparagine 115 and threonine 165 together coordinate substrate. Lysine 167 serves as the catalytic Proton acceptor. Lysine 169 contacts substrate. Residues lysine 193, aspartate 195, and glutamate 196 each coordinate Mg(2+). Position 193 is an N6-carboxylysine (lysine 193). Histidine 286 (proton acceptor) is an active-site residue. Substrate is bound by residues arginine 287, histidine 319, and serine 371.

Belongs to the RuBisCO large chain family. Type I subfamily. In terms of assembly, heterohexadecamer of 8 large chains and 8 small chains. The cofactor is Mg(2+).

The enzyme catalyses 2 (2R)-3-phosphoglycerate + 2 H(+) = D-ribulose 1,5-bisphosphate + CO2 + H2O. It carries out the reaction D-ribulose 1,5-bisphosphate + O2 = 2-phosphoglycolate + (2R)-3-phosphoglycerate + 2 H(+). RuBisCO catalyzes two reactions: the carboxylation of D-ribulose 1,5-bisphosphate, the primary event in carbon dioxide fixation, as well as the oxidative fragmentation of the pentose substrate. Both reactions occur simultaneously and in competition at the same active site. The protein is Ribulose bisphosphate carboxylase large chain of Alvinoconcha hessleri symbiotic bacterium.